A 1233-amino-acid chain; its full sequence is Structural maintenance of chromosomes protein 1A (1233 aa).

32–39 (GPNGSGKS) is an ATP binding site. Coiled coils occupy residues 104–124 (EYKINNKVVQLHEYSEELEKL) and 163–503 (ELAQ…KAEI). Residues 284-293 (IKEKDSELNQ) are compositionally biased toward basic and acidic residues. Disordered regions lie at residues 284-308 (IKEKDSELNQKRPQYIKAKENTSHK) and 348-369 (QEFEERMEEESQSQGRDLTLEE). 2 positions are modified to phosphoserine: Ser358 and Ser360. In terms of domain architecture, SMC hinge spans 515 to 629 (VYGRLIDLCQ…DNVEDARRIA (115 aa)). Lys648 and Lys713 each carry N6-acetyllysine. Positions 660–935 (KAKARRWDEK…RHNLLQACKM (276 aa)) form a coiled coil. The interval 947–968 (MDDISQEEGSSQGEDSVSGSQR) is disordered. Residues 953 to 967 (EEGSSQGEDSVSGSQ) are compositionally biased toward low complexity. 4 positions are modified to phosphoserine: Ser957, Ser962, Ser966, and Ser970. Residues 991 to 1068 (KDAQAEEEIK…FEQIKKERFD (78 aa)) adopt a coiled-coil conformation. N6-acetyllysine is present on Lys1037.

This sequence belongs to the SMC family. SMC1 subfamily. As to quaternary structure, forms a heterodimer with SMC3 in cohesin complexes. Cohesin complexes are composed of the SMC1 (SMC1A or meiosis-specific SMC1B) and SMC3 heterodimer attached via their SMC hinge domain, RAD21 which link them, and one STAG protein (STAG1, STAG2 or meiosis-specific STAG3), which interacts with RAD21. In germ cell cohesin complexes, SMC1A is mutually exclusive with SMC1B. Found in a complex with CDCA5, SMC3 and RAD21, PDS5A/SCC-112 and PDS5B/APRIN. Interacts with NDC80, SYCP2, STAG3, BRCA1 and BRAT1. The cohesin complex interacts with the cohesin loading complex subunits NIPBL/Scc2 (via HEAT repeats) and MAU2/Scc4. NIPBL directly contacts all members of the complex, RAD21, SMC1A/B, SMC3 and STAG1. Interacts with RPGR. Found in a complex containing POLE and SMC3. Phosphorylated upon ionizing radiation or DNA methylation. Phosphorylation of Ser-957 and Ser-966 activates it and is required for S-phase checkpoint activation. In terms of processing, ubiquitinated by the DCX(DCAF15) complex, leading to its degradation.

It localises to the nucleus. The protein resides in the chromosome. It is found in the centromere. In terms of biological role, involved in chromosome cohesion during cell cycle and in DNA repair. Involved in DNA repair via its interaction with BRCA1 and its related phosphorylation by ATM, and works as a downstream effector in the ATM/NBS1 branch of S-phase checkpoint. Central component of cohesin complex. The cohesin complex is required for the cohesion of sister chromatids after DNA replication. The cohesin complex apparently forms a large proteinaceous ring within which sister chromatids can be trapped. At anaphase, the complex is cleaved and dissociates from chromatin, allowing sister chromatids to segregate. The cohesin complex may also play a role in spindle pole assembly during mitosis. Involved in DNA repair via its interaction with BRCA1 and its related phosphorylation by ATM, or via its phosphorylation by ATR. Works as a downstream effector both in the ATM/NBS1 branch and in the ATR/MSH2 branch of S-phase checkpoint. The polypeptide is Structural maintenance of chromosomes protein 1A (SMC1A) (Bos taurus (Bovine)).